A 635-amino-acid chain; its full sequence is Transcription termination factor FttA (635 aa).

KHa stretches follow at residues 1–69 (MSAE…PSVL) and 4–69 (EDIL…PSVL). Residues 70–137 (VEPDIAKDKI…WAPKPVRTPP (68 aa)) are KHb. Metallo-beta-lactamase N-terminus stretches follow at residues 179 to 382 (WVRT…YGGY) and 179 to 383 (WVRT…GGYD). Beta-Casp stretches follow at residues 180-577 (VRTS…GFSG) and 383-576 (DDVL…EGFS). Zn(2+) contacts are provided by His241, His243, Asp245, His246, His328, and Asp351. Metallo-beta-lactamase C-terminus regions lie at residues 577–635 (GHSD…IRLR) and 578–635 (HSDR…IRLR). His602 is a binding site for Zn(2+).

It belongs to the metallo-beta-lactamase superfamily. RNA-metabolizing metallo-beta-lactamase-like family. FttA subfamily. In terms of assembly, homodimer. Interacts with RNA polymerase (RNAP); interaction is not dependent on DNA or RNA. Interacts with the Spt4-Spt5 complex. It depends on Zn(2+) as a cofactor.

The protein resides in the chromosome. Functionally, terminates transcription on the whole genome. Termination is linked to FttA-mediated RNA cleavage and does not require NTP hydrolysis. Cleaves endonucleolytically at the RNA exit channel of RNA polymerase (RNAP); the 5'-3' exonuclease activity of this protein degrades the nascent RNA released from RNAP. In terms of biological role, terminates transcription genome-wide. Transcription termination is most effective in vivo on RNAs with more than one U4-tract in their 3'-ends (including non-protein coding RNAs); U4-tracts are recognized by this protein. Also plays a role in termination of RNAs without U-tracts by an unknown mechanism. Has endonuclease activity after U-rich tracts in transcription termination sites. Binds RNA at U4-tracts found directly upstream of the experimentally determined transcription termination sites; binds preferentially to RNAs with more U4-tracts at their 3'-ends. In Methanococcus maripaludis (strain DSM 14266 / JCM 13030 / NBRC 101832 / S2 / LL), this protein is Transcription termination factor FttA.